Consider the following 2715-residue polypeptide: Cilia- and flagella-associated protein 46 (2715 aa).

TPR repeat units lie at residues 89–122 (CRAQ…AKGE), 175–208 (AELM…IKSH), 261–295 (GDIS…LLFE), 324–359 (PGKL…AQLD), 426–459 (CQVH…DSLG), 469–503 (STRL…TPKD), 807–845 (SRKF…TNGS), 936–969 (LQTL…GIKY), 1111–1144 (AALY…LPRT), and 1174–1211 (AESE…LQKP). The interval 1356–1412 (SHLLLPKKEKENERSKEKEKERSKEKENERSKEKDKEKGKEEKVKEPKQSQSPAPIK) is disordered. The segment covering 1361–1403 (PKKEKENERSKEKEKERSKEKENERSKEKDKEKGKEEKVKEPK) has biased composition (basic and acidic residues). Positions 1362-1401 (KKEKENERSKEKEKERSKEKENERSKEKDKEKGKEEKVKE) form a coiled coil. One copy of the TPR 11 repeat lies at 1639-1672 (AQCLLLLAQLANKEKNYGQAKKMIAQAQHLGGSE). A coiled-coil region spans residues 1781-1810 (VDVKLERAKIKRLRAQNEKDEEQKTAYYLE). 3 disordered regions span residues 2000 to 2023 (EEEG…EHCR), 2294 to 2319 (AVVA…HSTV), and 2371 to 2399 (ETEG…KGSI). Basic and acidic residues-rich tracts occupy residues 2300-2311 (GKSKGKDKERKT) and 2371-2383 (ETEG…GRSR). Positions 2384 to 2398 (DPKKRSLAKKGRKGS) are enriched in basic residues. 2 TPR repeats span residues 2399–2432 (IPRT…EMLT) and 2504–2537 (VAVL…EANW). Residues 2541 to 2567 (ASPSEDEWRRGGEPRRGFSDLEGQAAA) form a disordered region. Residues 2546–2559 (DEWRRGGEPRRGFS) are compositionally biased toward basic and acidic residues.

This sequence belongs to the CFAP46 family.

The protein localises to the cytoplasm. It localises to the cytoskeleton. Its subcellular location is the cilium axoneme. In terms of biological role, as part of the central apparatus of the cilium axoneme plays a role in cilium movement. In Homo sapiens (Human), this protein is Cilia- and flagella-associated protein 46.